Consider the following 540-residue polypeptide: GMP synthase [glutamine-hydrolyzing] (540 aa).

Positions 26-216 constitute a Glutamine amidotransferase type-1 domain; that stretch reads IIIILDFGSQ…VYHICECEPT (191 aa). The active-site Nucleophile is the cysteine 103. Catalysis depends on residues histidine 190 and glutamate 192. The GMPS ATP-PPase domain maps to 217–415; that stretch reads WTTAAFVEEA…VGLPEEIVQR (199 aa). Position 244-250 (244-250) interacts with ATP; that stretch reads SGGVDSS.

In terms of assembly, homodimer.

The enzyme catalyses XMP + L-glutamine + ATP + H2O = GMP + L-glutamate + AMP + diphosphate + 2 H(+). It functions in the pathway purine metabolism; GMP biosynthesis; GMP from XMP (L-Gln route): step 1/1. In terms of biological role, catalyzes the synthesis of GMP from XMP. This chain is GMP synthase [glutamine-hydrolyzing], found in Nostoc sp. (strain PCC 7120 / SAG 25.82 / UTEX 2576).